Consider the following 299-residue polypeptide: Tetrahydromethanopterin S-methyltransferase subunit E (299 aa).

Helical transmembrane passes span 57-77, 80-100, 133-153, 158-178, 237-257, and 261-281; these read AISG…SVAW, INAG…AAIV, IGPI…AAYL, LGNP…VGAI, GLCF…GNII, and LVTK…AAMI.

It belongs to the MtrE family. In terms of assembly, the complex is composed of 8 subunits; MtrA, MtrB, MtrC, MtrD, MtrE, MtrF, MtrG and MtrH.

It is found in the cell membrane. It carries out the reaction 5-methyl-5,6,7,8-tetrahydromethanopterin + coenzyme M + 2 Na(+)(in) = 5,6,7,8-tetrahydromethanopterin + methyl-coenzyme M + 2 Na(+)(out). It participates in one-carbon metabolism; methanogenesis from CO(2); methyl-coenzyme M from 5,10-methylene-5,6,7,8-tetrahydromethanopterin: step 2/2. Its function is as follows. Part of a complex that catalyzes the formation of methyl-coenzyme M and tetrahydromethanopterin from coenzyme M and methyl-tetrahydromethanopterin. This is an energy-conserving, sodium-ion translocating step. The protein is Tetrahydromethanopterin S-methyltransferase subunit E of Methanococcus vannielii (strain ATCC 35089 / DSM 1224 / JCM 13029 / OCM 148 / SB).